The sequence spans 363 residues: Small ribosomal subunit biogenesis GTPase RsgA (363 aa).

The region spanning 112-268 (HQQVIAANID…LIDTPGMREL (157 aa)) is the CP-type G domain. GTP contacts are provided by residues 157-160 (TKAD) and 210-218 (GSSGAGKST). Residues cysteine 291, cysteine 296, histidine 298, and cysteine 304 each contribute to the Zn(2+) site. Positions 340-363 (RVAQNNRGKGSGKRPASVDRPGRH) are disordered.

The protein belongs to the TRAFAC class YlqF/YawG GTPase family. RsgA subfamily. Monomer. Associates with 30S ribosomal subunit, binds 16S rRNA. The cofactor is Zn(2+).

It is found in the cytoplasm. Functionally, one of several proteins that assist in the late maturation steps of the functional core of the 30S ribosomal subunit. Helps release RbfA from mature subunits. May play a role in the assembly of ribosomal proteins into the subunit. Circularly permuted GTPase that catalyzes slow GTP hydrolysis, GTPase activity is stimulated by the 30S ribosomal subunit. This chain is Small ribosomal subunit biogenesis GTPase RsgA, found in Xanthomonas axonopodis pv. citri (strain 306).